A 105-amino-acid polypeptide reads, in one-letter code: Integration host factor subunit beta (105 aa).

It belongs to the bacterial histone-like protein family. Heterodimer of an alpha and a beta chain.

This protein is one of the two subunits of integration host factor, a specific DNA-binding protein that functions in genetic recombination as well as in transcriptional and translational control. The polypeptide is Integration host factor subunit beta (Nitrosomonas eutropha (strain DSM 101675 / C91 / Nm57)).